The sequence spans 184 residues: ATP synthase subunit b, chloroplastic (184 aa).

Residues 27–49 (LATNPINLSVVLGVLIFFGKGVL) traverse the membrane as a helical segment.

Belongs to the ATPase B chain family. In terms of assembly, F-type ATPases have 2 components, F(1) - the catalytic core - and F(0) - the membrane proton channel. F(1) has five subunits: alpha(3), beta(3), gamma(1), delta(1), epsilon(1). F(0) has four main subunits: a(1), b(1), b'(1) and c(10-14). The alpha and beta chains form an alternating ring which encloses part of the gamma chain. F(1) is attached to F(0) by a central stalk formed by the gamma and epsilon chains, while a peripheral stalk is formed by the delta, b and b' chains.

Its subcellular location is the plastid. It localises to the chloroplast thylakoid membrane. Its function is as follows. F(1)F(0) ATP synthase produces ATP from ADP in the presence of a proton or sodium gradient. F-type ATPases consist of two structural domains, F(1) containing the extramembraneous catalytic core and F(0) containing the membrane proton channel, linked together by a central stalk and a peripheral stalk. During catalysis, ATP synthesis in the catalytic domain of F(1) is coupled via a rotary mechanism of the central stalk subunits to proton translocation. Component of the F(0) channel, it forms part of the peripheral stalk, linking F(1) to F(0). The protein is ATP synthase subunit b, chloroplastic of Oenothera argillicola (Appalachian evening primrose).